Consider the following 157-residue polypeptide: Catabolic 3-dehydroquinase (157 aa).

Tyrosine 27 (proton acceptor) is an active-site residue. The substrate site is built by asparagine 80, histidine 86, and aspartate 93. Catalysis depends on histidine 106, which acts as the Proton donor. Substrate is bound by residues 107 to 108 (VS) and arginine 117.

The protein belongs to the type-II 3-dehydroquinase family. In terms of assembly, homododecamer. Adopts a ring-like structure, composed of an arrangement of two hexameric rings stacked on top of one another.

It catalyses the reaction 3-dehydroquinate = 3-dehydroshikimate + H2O. It participates in aromatic compound metabolism; 3,4-dihydroxybenzoate biosynthesis; 3,4-dihydroxybenzoate from 3-dehydroquinate: step 1/2. Functionally, is involved in the catabolism of quinate. Allows the utilization of quinate as carbon source via the beta-ketoadipate pathway. This is Catabolic 3-dehydroquinase from Pyricularia oryzae (strain 70-15 / ATCC MYA-4617 / FGSC 8958) (Rice blast fungus).